The primary structure comprises 100 residues: Large ribosomal subunit protein eL21 (100 aa).

The disordered stretch occupies residues 1–21 (MVKRTHGYRYKSRKLLRKKPR).

Belongs to the eukaryotic ribosomal protein eL21 family.

The chain is Large ribosomal subunit protein eL21 from Pyrobaculum islandicum (strain DSM 4184 / JCM 9189 / GEO3).